The following is a 1294-amino-acid chain: MAQPPLLRDVIDIKESISTSDFVLSLAEATTPAGAQHALRDYVVTERLLENFDEALALIKSSLDGHRSKAAYLHGSFGSGKSHFMAVLYALLSGDQAARARTEFDPVLTKHQWLSTDGKKFLLVPYHMLGAKALEQRVLGGYVTHVKKLCPEAPTPQVYRTDSLFADIRAMRANMGDEAVIRALGTSGADDAEEDEWGEGFAWTPQLLDTALAAEESHEAGVHLNLTNPSTPAELRAKLVNDAGTNLLPGFTQNAAEDEHGFISLDAGLSVIAEHAKSLGYDGLILFMDELILWLATLIHDQKFVAREASKITNFVEGGDARRAIPVMSFIARQRDLRELVGEEVSGAAESSIQDTLNLASGRFDKITLEDRKLPQIAHARLLKPKDAEAAQQVDAAFEQTKRVGPQVWDTLLGSEKGTTGADAESFRLTYPFSPAFMDTLVHISSALQRSRTGLKLMGQLLADHRDELRLGQLVPVGDLYPVIAQGGDKPFTDSLKVVFEAADKLYKTKLRPYLLSSYDITEDDVEQYRNRPESLTDPKKLNGCRMFTGDNRLVCTLLLSALAPSVPALSELTIRRLGALNHGSVLAPIPGAEVGIIKNKVAEWAARFPEIKETGTDANPGVRLELSGVDVDSVIANAQVNDNPGNRVALARRLLSEELGVEHGQLSDQLGFTWRGTARTAEIVFGNVADEDELPDHDLMPQEEGRWRIAIDLPFDEGEWGPVEDVNRVQRLRERQQGERSRTIAWLPAHLSATRFADFRRLVVIDKALADEHRFDTQYAGHLNADNRSRAKGLLETQREALLKQAKGAFKQAYGLAQKQAADVVPDFDDHLVALPDVDGLTLSFGQSLHDGIRHVAGKLLTHQYPAHPDLDPDATGTAVKPADTKKVFAHVRAAAEARDGRIEVPAADRKLMQRIAGPLRLGQQKEAYFELSRYWGDHFRQLARSQGVTGDLSLITLTDWTDRPDPRGLPDFLARLVVAAFAEMDDRVWVRGGTVLDPAPELAAIKDHDALRSQPLPAESDWDTARQRFETVFGAKPPALRRGRMVNQFARQIIEAARDYRDHAADLVHQLEAHASFLGLDQTADTGRLALARRSLQLLDALTAEAGKGAAGAKKTVEALASFDLGETSADRYGTSIKKARAVAEAVASAPWSTLELAAGLGPEGEALLDSLRNVARDDQRTADLRDALARTQREVVALIKRTQAAATPPPAPAASQPTAGDLSLDTPTSDPRIPYTSQETPTSSGGAGTARTSGGRRTTAARAVTDLQAELSDLAVRHPEATIEITWRVVE.

Residues 1205–1263 (TQAAATPPPAPAASQPTAGDLSLDTPTSDPRIPYTSQETPTSSGGAGTARTSGGRRTTA) form a disordered region. Polar residues predominate over residues 1228–1244 (DTPTSDPRIPYTSQETP). The span at 1252-1263 (TARTSGGRRTTA) shows a compositional bias: low complexity.

Its function is as follows. BREX systems (bacteriophage exclusion) provide immunity against bacteriophage. Part of a type 2 BREX system. Previously called the phage growth limitation (Pgl) system, it confers protection against bacteriophage phiC31. The bacteria allows one cycle of phage infection, but subsequent cycles are impaired, protecting the original bacterial colony. The system undergoes high rates (10(-3) to 10(-4)) of phase reversion, i.e. loss and regain of phiC31 resistance. When the pglW-pglX-pglY-pglZ genes are transformed into a susceptible S.lividans (strain 1326) they confer resistance to infection by phage phiC31 and phiBT1; all 4 genes are necessary. Functionally, hydrolyzes ATP but not AMP, ADP, GMP, GDP or GTP; activity is inhibited by the non-hydrolyzable ATP analog 5-adenylyl beta,gamma-imidodiphosphate. This Streptomyces coelicolor (strain ATCC BAA-471 / A3(2) / M145) protein is ATPase PglY.